We begin with the raw amino-acid sequence, 681 residues long: MQKGNIGVTTENIFPIIKKFLYSDHEIFLRELVSNAVDATQKLNTLASIGEFKGELGDLTIHVELGKDTITISDRGIGLTAEEIEKYINQIAFSGANDFLEKYKDDANAIIGHFGLGFYSAFMVAKKVEIITKSYRDEAQAIKWTCDGSPEFTIEEVDKADRGSDIILYIDDDCKEFLEEARVSELLKKYCSFLPVPIAFGKKKEWKDGKQIETTEDNIINDTTPLWTRKPSELSDEDYKSFYTKLYPMSDEPLFWIHLNVDYPFHLTGILYFPKVKSNIELNKNKIQLYCNQVYVTDSVEGIVPDFLTLLHGVIDSPDIPLNVSRSYLQSDSNVKKISTYITKKVSDRLQSIFKNDRKQFEEKWNDLKIFINYGMLTQEDFYEKAQKFALFTDTDNKHYTFEEYQTLIKDNQTDKDGNLIYLYANNKDEQFSYIEAATNKGYNVLLMDGQLDVAMVSMLEQKFEKSRFTRVDSDVIDNLIIKEDKKNETLEGEKQEAITTAFKSQLPKMDKVEFNVMTQALGDNSAPVMITQSEYMRRMKEMANIQAGMSFYGEMPDMFNLVLNSDHKLIKQVLDEEEAACHPEVAPIQTEMNSVSKRRNELKDSQKDKKEEDIPTAEKDELNELDKKWDELKNKKEGIFAGYASNNKVIRQLIDLALLQNNMLKGEALNNFVKRSIELI.

The segment at 1 to 326 (MQKGNIGVTT…SPDIPLNVSR (326 aa)) is a; substrate-binding. Positions 327-545 (SYLQSDSNVK…YMRRMKEMAN (219 aa)) are b. Residues 546-681 (IQAGMSFYGE…NFVKRSIELI (136 aa)) form a c region. The disordered stretch occupies residues 589–620 (IQTEMNSVSKRRNELKDSQKDKKEEDIPTAEK). Over residues 599–620 (RRNELKDSQKDKKEEDIPTAEK) the composition is skewed to basic and acidic residues.

Belongs to the heat shock protein 90 family. In terms of assembly, homodimer.

It localises to the cytoplasm. In terms of biological role, molecular chaperone. Has ATPase activity. The polypeptide is Chaperone protein HtpG (Bacteroides thetaiotaomicron (strain ATCC 29148 / DSM 2079 / JCM 5827 / CCUG 10774 / NCTC 10582 / VPI-5482 / E50)).